The chain runs to 175 residues: Large ribosomal subunit protein uL10 (175 aa).

The protein belongs to the universal ribosomal protein uL10 family. In terms of assembly, part of the ribosomal stalk of the 50S ribosomal subunit. The N-terminus interacts with L11 and the large rRNA to form the base of the stalk. The C-terminus forms an elongated spine to which L12 dimers bind in a sequential fashion forming a multimeric L10(L12)X complex.

Its function is as follows. Forms part of the ribosomal stalk, playing a central role in the interaction of the ribosome with GTP-bound translation factors. In Psychrobacter arcticus (strain DSM 17307 / VKM B-2377 / 273-4), this protein is Large ribosomal subunit protein uL10.